Reading from the N-terminus, the 774-residue chain is MLLGSTNTLRISSHGKEWEGKTLTGMPLGKVNQRVKVPASDSEGAITSKIKEMLSKVGLSVSSYDTAWVAMVPTLDSSKQPLFPKSLNWIMENQQSDGSWGLDLQHPLLIKDSLSSTLACVLALQKWNVGQQLIHKGLDFIQSNIWAAKDEHQHSPIGFDIIFPSMIEYGRDMGLNLSLNQSLVETMLLKRELETKSLKDKPSNLAYVAEGLNRLNDWKEVMKFQRSNGSLFNSPSSTAAALIHLHDGKCFEYLNSLAKQFGNAVPTIYPFDIYARLSIIDTLEKLGIDSYVSEDKERVLDDICRCWMQGSEEIFLDPTCCAMAFRLLRMNGYAISSDALANFDEKEKLLHTKDIKAMLELFKASQLEICEDESALCRIYAWTSNYLKEELVNGEIPDKSLQAEVDHALGHPHASMERKEIKNFIENYNADKVSLLKTSYRFCNANENYLLAFSFRDFNMYQSMHREELDDLERWVKQYGLDKLKYARQTIRSAYFSITSSLFQPNHSDARISWAQNTVLTTVVDDFFDFSGSMEELLNLIELIERWDEHTTIGFKSKEVEILFNALYGSVNDLADKAYIVQGRCVKRDLIDIWIILLKTMLKEAEWARDKNVPGMDEYIENGYISFALGPVILISLYLMEPLSEEVVTSKEYDNLFIHASIIGRLLNDRVTAKREFAQGKLNSVSLQVVGSNGAITEEEAKEEVTRIITSHRRELLRMVVQTEGSIVPKSCKNLFWTMSKLLHLFYMSEDGYSSPTKMLSAINAIVNEPIVLP.

The N-terminal 35 residues, 1–35 (MLLGSTNTLRISSHGKEWEGKTLTGMPLGKVNQRV), are a transit peptide targeting the chloroplast. Asp-525, Asp-529, Asn-668, Asp-669, Thr-672, and Glu-676 together coordinate Mg(2+). Positions 525–529 (DDFFD) match the DDXXD motif motif.

This sequence belongs to the terpene synthase family. Mg(2+) is required as a cofactor.

The protein localises to the plastid. It is found in the chloroplast. It catalyses the reaction ent-copalyl diphosphate = ent-beyerene + diphosphate. The enzyme catalyses ent-copalyl diphosphate = ent-atiserene + diphosphate. It carries out the reaction ent-copalyl diphosphate = ent-kaur-16-ene + diphosphate. Its pathway is secondary metabolite biosynthesis; terpenoid biosynthesis. Functionally, diterpene cyclase involved in the biosynthesis of labdane-related diterpenoids (LRDs) natural products. Catalyzes the cyclization of ent-CDP into ent-beyerene as a major and ent-kaurene and ent-atiserene as minor products. The sequence is that of Ent-beyerene synthase KSL4, chloroplastic from Ricinus communis (Castor bean).